We begin with the raw amino-acid sequence, 85 residues long: U4-theraphotoxin-Hhn1a (85 aa).

Positions 1 to 22 are cleaved as a signal peptide; the sequence is MKVTLIAILTCAAVLVLHTTAE. The propeptide occupies 23–48; sequence EELEAESQLMEVGMPDTELAAVDEER. Intrachain disulfides connect C52-C66, C56-C77, and C71-C82.

This sequence belongs to the neurotoxin 12 (Hwtx-2) family. 02 (Hwtx-2) subfamily. As to quaternary structure, monomer. Expressed by the venom gland.

It is found in the secreted. Its function is as follows. Neurotoxin active on both insects and mammals. The sequence is that of U4-theraphotoxin-Hhn1a from Cyriopagopus hainanus (Chinese bird spider).